Reading from the N-terminus, the 117-residue chain is NADH-ubiquinone oxidoreductase chain 3 (117 aa).

3 consecutive transmembrane segments (helical) span residues 3–23 (LLLTILFITTILSLILAIVSF), 56–76 (FFLVAILFLLFDLEIALLLPL), and 85–105 (PMFTLLWASALLIMLTLGLIY).

This sequence belongs to the complex I subunit 3 family.

The protein localises to the mitochondrion membrane. The enzyme catalyses a ubiquinone + NADH + 5 H(+)(in) = a ubiquinol + NAD(+) + 4 H(+)(out). Functionally, core subunit of the mitochondrial membrane respiratory chain NADH dehydrogenase (Complex I) that is believed to belong to the minimal assembly required for catalysis. Complex I functions in the transfer of electrons from NADH to the respiratory chain. The immediate electron acceptor for the enzyme is believed to be ubiquinone. This chain is NADH-ubiquinone oxidoreductase chain 3 (MT-ND3), found in Tetraodon nigroviridis (Spotted green pufferfish).